A 706-amino-acid polypeptide reads, in one-letter code: MPGERRRFAQATKSVGVSWPAKVRRRDGTLVPFDIARIEAAVTRAAREVACDDPDMPGTVAKAVADALGRGIAPVEDIQDCVEARLGEAGLDDVARVYIIYRQRRAELRTAKALLGVRDELKLSLAAVTVLRERYLLHDEQGRPAESTGELMDRSARCVAAAEDQYEPGSSRRWAERFATLLRNLEFLPNSPTLMNSGTDLGLLAGCFVLPIEDSLQSIFATLGQAAELQRAGGGTGYAFSHLRPAGDRVASTGGTASGPVSFLRLYDSAAGVVSMGGRRRGACMAVLDVSHPDICDFVTAKAESPSELPHFNLSVGVTDAFLRAVERNGLHRLVNPRTGKIVARMPAAELFDAICKAAHAGGDPGLVFLDTINRANPVPGRGRIEATNPCGEVPLLPYESCNLGSINLARMLADGRVDWDRLEEVAGVAVRFLDDVIDVSRYPFPELGEAARATRKIGLGVMGLAELLAALGIPYDSEEAVRLATRLMRRIQQAAHTASRRLAEERGAFPAFTDSRFARSGPRRNAQVTSVAPTGTISLIAGTTAGIEPMFAIAFTRAIVGRHLLEVNPCFDRLARDRGFYRDELIAEIAQRGGVRGYPRLPAEVRAAFPTAAEIAPQWHLRMQAAVQRHVEAAVSKTVNLPATATVDDVRAIYVAAWKAKVKGITVYRYGSREGQVLSYAAPKPLLAQADTEFSGGCAGRSCEF.

Positions 21–109 (AKVRRRDGTL…IYRQRRAELR (89 aa)) constitute an ATP-cone domain. Substrate-binding positions include Ser191, 206–207 (GC), Gly235, 389–393 (NPCGE), and 534–538 (PTGTI). Cysteines 207 and 402 form a disulfide. Residue Asn389 is the Proton acceptor of the active site. Cys391 acts as the Cysteine radical intermediate in catalysis. The active-site Proton acceptor is Glu393.

This sequence belongs to the ribonucleoside diphosphate reductase class-2 family. The cofactor is adenosylcob(III)alamin.

It catalyses the reaction a 2'-deoxyribonucleoside 5'-diphosphate + [thioredoxin]-disulfide + H2O = a ribonucleoside 5'-diphosphate + [thioredoxin]-dithiol. Its function is as follows. Provides the precursors necessary for DNA synthesis. Catalyzes the biosynthesis of deoxyribonucleotides from the corresponding ribonucleotides. This Mycobacterium tuberculosis (strain ATCC 25618 / H37Rv) protein is Vitamin B12-dependent ribonucleoside-diphosphate reductase (nrdZ).